Here is a 412-residue protein sequence, read N- to C-terminus: Glucose-1-phosphate adenylyltransferase (412 aa).

Alpha-D-glucose 1-phosphate contacts are provided by residues Tyr-98, Gly-163, 178-179, and Ser-189; that span reads EK.

The protein belongs to the bacterial/plant glucose-1-phosphate adenylyltransferase family. In terms of assembly, homotetramer.

It carries out the reaction alpha-D-glucose 1-phosphate + ATP + H(+) = ADP-alpha-D-glucose + diphosphate. The protein operates within glycan biosynthesis; glycogen biosynthesis. Its function is as follows. Involved in the biosynthesis of ADP-glucose, a building block required for the elongation reactions to produce glycogen. Catalyzes the reaction between ATP and alpha-D-glucose 1-phosphate (G1P) to produce pyrophosphate and ADP-Glc. The chain is Glucose-1-phosphate adenylyltransferase from Thermosipho africanus (strain TCF52B).